The chain runs to 548 residues: Protoporphyrinogen oxidase, chloroplastic (548 aa).

Residues 1 to 50 (MTTTPIANHPNIFTHQSSSSPLAFLNRTSFIPFSSISKRNSVNCNGWRTR) constitute a chloroplast transit peptide. Residues 78 to 83 (GAGISG), 101 to 102 (EA), and 123 to 126 (GPNS) each bind FAD. Residues 265–279 (KERSSTPKAPRDPRL) show a composition bias toward basic and acidic residues. A disordered region spans residues 265 to 287 (KERSSTPKAPRDPRLPKPKGQTV). 522–524 (VAL) contributes to the FAD binding site.

This sequence belongs to the protoporphyrinogen/coproporphyrinogen oxidase family. Protoporphyrinogen oxidase subfamily. As to quaternary structure, homodimer. FAD serves as cofactor.

Its subcellular location is the plastid. The protein localises to the chloroplast. The catalysed reaction is protoporphyrinogen IX + 3 O2 = protoporphyrin IX + 3 H2O2. It participates in porphyrin-containing compound metabolism; protoporphyrin-IX biosynthesis; protoporphyrin-IX from protoporphyrinogen-IX: step 1/1. Its pathway is porphyrin-containing compound metabolism; chlorophyll biosynthesis. Its function is as follows. Catalyzes the 6-electron oxidation of protoporphyrinogen-IX to form protoporphyrin-IX. The polypeptide is Protoporphyrinogen oxidase, chloroplastic (PPXI) (Nicotiana tabacum (Common tobacco)).